Consider the following 451-residue polypeptide: Tubulin beta-1 chain (451 aa).

Positions 11, 73, 142, 146, 147, 148, 208, and 230 each coordinate GTP. Glutamate 73 contacts Mg(2+). Residues 430–451 form a disordered region; the sequence is QEATADDEAEFEEEGEVEGEYA. Over residues 433 to 451 the composition is skewed to acidic residues; the sequence is TADDEAEFEEEGEVEGEYA.

The protein belongs to the tubulin family. In terms of assembly, dimer of alpha and beta chains. A typical microtubule is a hollow water-filled tube with an outer diameter of 25 nm and an inner diameter of 15 nM. Alpha-beta heterodimers associate head-to-tail to form protofilaments running lengthwise along the microtubule wall with the beta-tubulin subunit facing the microtubule plus end conferring a structural polarity. Microtubules usually have 13 protofilaments but different protofilament numbers can be found in some organisms and specialized cells. Mg(2+) is required as a cofactor.

It is found in the cytoplasm. Its subcellular location is the cytoskeleton. In terms of biological role, tubulin is the major constituent of microtubules, a cylinder consisting of laterally associated linear protofilaments composed of alpha- and beta-tubulin heterodimers. Microtubules grow by the addition of GTP-tubulin dimers to the microtubule end, where a stabilizing cap forms. Below the cap, tubulin dimers are in GDP-bound state, owing to GTPase activity of alpha-tubulin. This is Tubulin beta-1 chain from Homarus americanus (American lobster).